Consider the following 340-residue polypeptide: NADPH dehydrogenase (340 aa).

23 to 26 (SPMC) is a binding site for FMN. A substrate-binding site is contributed by Y28. The FMN site is built by A60 and Q102. 164 to 167 (HGAH) lines the substrate pocket. FMN is bound by residues R215 and 307–308 (AR).

Belongs to the NADH:flavin oxidoreductase/NADH oxidase family. NamA subfamily. Homotetramer. It depends on FMN as a cofactor.

It catalyses the reaction A + NADPH + H(+) = AH2 + NADP(+). Functionally, catalyzes the reduction of the double bond of an array of alpha,beta-unsaturated aldehydes and ketones. It also reduces the nitro group of nitroester and nitroaromatic compounds. It could have a role in detoxification processes. The chain is NADPH dehydrogenase from Geobacillus sp. (strain WCH70).